Consider the following 138-residue polypeptide: PTS system sorbose-specific EIIA component (138 aa).

Residues 1–125 (MEIILVGHAH…KIKEEFSTSL (125 aa)) enclose the PTS EIIA type-4 domain. Histidine 8 functions as the Tele-phosphohistidine intermediate in the catalytic mechanism. Histidine 8 is subject to Phosphohistidine; by HPr.

The protein localises to the cytoplasm. The phosphoenolpyruvate-dependent sugar phosphotransferase system (PTS), a major carbohydrate active transport system, catalyzes the phosphorylation of incoming sugar substrates concomitant with their translocation across the cell membrane. The enzyme II SorABCD PTS system is involved in L-sorbose transport. The polypeptide is PTS system sorbose-specific EIIA component (Lacticaseibacillus casei (Lactobacillus casei)).